A 144-amino-acid chain; its full sequence is MLKGIHPAISPDLLKILAEMGHGDELVLSDAHFPAHQLHHKVVRADGISINSLLTGIAPLFEFDTYTEAPLIMMQAVEGDSLDPAVEQSYLQTIKSAVGNVPKLARMDRFAFYERAKQAYAVVITGETAKYGNIIIKKGVTPVK.

Catalysis depends on His-22, which acts as the Proton donor. Substrate-binding positions include Asp-30, Arg-109, and 131–133 (YGN).

The protein belongs to the RbsD / FucU family. FucU mutarotase subfamily. Homodecamer.

The protein localises to the cytoplasm. The enzyme catalyses alpha-L-fucose = beta-L-fucose. It functions in the pathway carbohydrate metabolism; L-fucose metabolism. Functionally, involved in the anomeric conversion of L-fucose. In Histophilus somni (strain 129Pt) (Haemophilus somnus), this protein is L-fucose mutarotase.